Consider the following 411-residue polypeptide: Pyruvate dehydrogenase E1 component subunit alpha, mitochondrial (411 aa).

Residues 1 to 29 (MFSRAVRLSRAALPIRVASQRVPIAARRS) constitute a mitochondrion transit peptide. Pyruvate contacts are provided by histidine 111, tyrosine 137, arginine 138, glycine 184, valine 186, aspartate 215, glycine 216, alanine 217, asparagine 244, and tyrosine 246. Thiamine diphosphate-binding residues include tyrosine 137, arginine 138, glycine 184, valine 186, aspartate 215, glycine 216, alanine 217, and asparagine 244. Mg(2+) is bound at residue aspartate 215. Residues asparagine 244 and tyrosine 246 each coordinate Mg(2+). Histidine 311 is a thiamine diphosphate binding site.

As to quaternary structure, eukaryotic pyruvate dehydrogenase (PDH) complexes are organized as a core consisting of the oligomeric dihydrolipoamide acetyl-transferase (E2), around which are arranged multiple copies of pyruvate dehydrogenase (E1), dihydrolipoamide dehydrogenase (E3) and protein X (E3BP) bound by non-covalent bonds. The Chaetomium thermophilum PDH complex contains 60 E2 units, 12 E3BP units, about 20 E1 units, and 12 or more E3 units. The units are organized in 1 E2 60-mer, 4 E3BP trimers, about 20 E1 tetramers, and a maximum of 12 E3 dimers. Pyruvate dehydrogenase (E1) is active as a tetramer of 2 alpha and 2 beta subunits. The E3BP trimers are bound inside the icosahedral core with tetrahedral symmetry. Thiamine diphosphate serves as cofactor. Requires Mg(2+) as cofactor.

The protein localises to the mitochondrion. The enzyme catalyses N(6)-[(R)-lipoyl]-L-lysyl-[protein] + pyruvate + H(+) = N(6)-[(R)-S(8)-acetyldihydrolipoyl]-L-lysyl-[protein] + CO2. In terms of biological role, the 10-megadalton pyruvate dehydrogenase complex contains multiple copies of three enzymatic components: pyruvate dehydrogenase (E1), dihydrolipoamide acetyltransferase (E2) and lipoamide dehydrogenase (E3) and catalyzes the overall oxidative decarboxylation of pyruvate to form acetyl-CoA and CO(2). Within the complex, pyruvate and thiamine pyrophosphate (TPP or vitamin B1) are bound by pyruvate dehydrogenase E1 subunits alpha and beta and pyruvate is decarboxylated leading to the 2-carbon hydrohyethyl bound to TPP. The E2 component contains covalently-bound lipoyl cofactors and transfers the hydroxyethyl group from TPP to an oxidized form of covalently bound lipoamide, and the resulting acetyl group is then transferred to free coenzyme A to form acetyl-CoA and reduced dihydrolipoamide-E2. Finally, the flavoprotein dihydrolipoamide dehydrogenase (E3) re-oxidizes the lipoyl group of dihydrolipoamide-E2 to form lipoamide-E2 and NADH. A fourth subunit, E3BP, is responsible for tethering E3 in proximity to the core, forming the entire metabolon. The protein is Pyruvate dehydrogenase E1 component subunit alpha, mitochondrial of Chaetomium thermophilum (strain DSM 1495 / CBS 144.50 / IMI 039719) (Thermochaetoides thermophila).